Reading from the N-terminus, the 84-residue chain is ATP synthase subunit c (84 aa).

Helical transmembrane passes span 9-29 (IFGSVILLAAAALGTAIGFSL) and 54-74 (IVAGLLDAISMIAVGIALLFI).

The protein belongs to the ATPase C chain family. F-type ATPases have 2 components, F(1) - the catalytic core - and F(0) - the membrane proton channel. F(1) has five subunits: alpha(3), beta(3), gamma(1), delta(1), epsilon(1). F(0) has three main subunits: a(1), b(2) and c(10-14). The alpha and beta chains form an alternating ring which encloses part of the gamma chain. F(1) is attached to F(0) by a central stalk formed by the gamma and epsilon chains, while a peripheral stalk is formed by the delta and b chains.

The protein localises to the cell inner membrane. F(1)F(0) ATP synthase produces ATP from ADP in the presence of a proton or sodium gradient. F-type ATPases consist of two structural domains, F(1) containing the extramembraneous catalytic core and F(0) containing the membrane proton channel, linked together by a central stalk and a peripheral stalk. During catalysis, ATP synthesis in the catalytic domain of F(1) is coupled via a rotary mechanism of the central stalk subunits to proton translocation. In terms of biological role, key component of the F(0) channel; it plays a direct role in translocation across the membrane. A homomeric c-ring of between 10-14 subunits forms the central stalk rotor element with the F(1) delta and epsilon subunits. The sequence is that of ATP synthase subunit c from Histophilus somni (strain 2336) (Haemophilus somnus).